A 365-amino-acid chain; its full sequence is Probable UDP-arabinopyranose mutase 1 (365 aa).

The DXD motif motif lies at 100–102; the sequence is DDD. Arg148 is a glycosylation site (N-linked (Glc...) arginine).

Belongs to the RGP family. Homopentamer or homohexamer. It depends on Mn(2+) as a cofactor. The cofactor is Mg(2+). Post-translationally, reversibly glycosylated by UDP-glucose, UDP-xylose and UDP-galactose, but not UDP-mannose. Expressed in all tissues tested, including root, tuber, leaf, petiole, shoot, stolon and stem.

It is found in the secreted. The protein resides in the cell wall. It localises to the cell junction. Its subcellular location is the plasmodesma. The protein localises to the golgi apparatus. The catalysed reaction is UDP-beta-L-arabinofuranose = UDP-beta-L-arabinopyranose. Functionally, probable UDP-L-arabinose mutase involved in the biosynthesis of cell wall non-cellulosic polysaccharides. Was initially shown to possess an autoglycosylating activity which is dependent on the presence of UDP-glucose and manganese. This chain is Probable UDP-arabinopyranose mutase 1, found in Solanum tuberosum (Potato).